The primary structure comprises 188 residues: Elongation factor P (188 aa).

Belongs to the elongation factor P family.

It localises to the cytoplasm. It functions in the pathway protein biosynthesis; polypeptide chain elongation. In terms of biological role, involved in peptide bond synthesis. Stimulates efficient translation and peptide-bond synthesis on native or reconstituted 70S ribosomes in vitro. Probably functions indirectly by altering the affinity of the ribosome for aminoacyl-tRNA, thus increasing their reactivity as acceptors for peptidyl transferase. The sequence is that of Elongation factor P from Acidiphilium cryptum (strain JF-5).